The primary structure comprises 192 residues: MGARDCTPLLMLSFLLFPLGFPVLGAPARLICDSRVLERYILEAREAENATMGCAEGCSFNENITVPDTKVNFYAWKRMEVQQQAQEVWQGLALLSEAILRGQALLANASQPCEALRLHVDKAVSGLRSLTSLLRALGAQKEAISLPDATPSAAPLRAFTVDALSKLFRIYSNFLRGKLTLYTGEACRRGDR.

An N-terminal signal peptide occupies residues 1-25 (MGARDCTPLLMLSFLLFPLGFPVLG). 2 cysteine pairs are disulfide-bonded: Cys32/Cys187 and Cys54/Cys58. The N-linked (GlcNAc...) asparagine glycan is linked to Asn49. N-linked (GlcNAc...) asparagine glycans are attached at residues Asn63 and Asn108.

Belongs to the EPO/TPO family. In terms of tissue distribution, produced by kidney or liver of adult mammals and by liver of fetal or neonatal mammals.

It is found in the secreted. Its function is as follows. Hormone involved in the regulation of erythrocyte proliferation and differentiation and the maintenance of a physiological level of circulating erythrocyte mass. Binds to EPOR leading to EPOR dimerization and JAK2 activation thereby activating specific downstream effectors, including STAT1 and STAT3. This is Erythropoietin (EPO) from Bos mutus grunniens (Wild yak).